Reading from the N-terminus, the 204-residue chain is Probable chorismate pyruvate-lyase (204 aa).

Substrate is bound by residues Arg75, Leu113, and Glu160.

This sequence belongs to the UbiC family.

The protein localises to the cytoplasm. It catalyses the reaction chorismate = 4-hydroxybenzoate + pyruvate. Its pathway is cofactor biosynthesis; ubiquinone biosynthesis. In terms of biological role, removes the pyruvyl group from chorismate, with concomitant aromatization of the ring, to provide 4-hydroxybenzoate (4HB) for the ubiquinone pathway. The sequence is that of Probable chorismate pyruvate-lyase from Alcanivorax borkumensis (strain ATCC 700651 / DSM 11573 / NCIMB 13689 / SK2).